A 637-amino-acid chain; its full sequence is Keratin, type II cytoskeletal 1 (637 aa).

The interval 1–187 (MSLQCSSRSL…DPQIQKVKSQ (187 aa)) is head. R12 is subject to Omega-N-methylarginine. Phosphoserine occurs at positions 21 and 24. R49 is subject to Omega-N-methylarginine. The residue at position 67 (S67) is a Phosphoserine. The stretch at 180–328 (QIQKVKSQER…DIDFFSALYQ (149 aa)) forms a coiled coil. A coil 1A region spans residues 188–223 (EREQIKSLNDKFASFIDKVRFLEQQNQVLQTKWELL). One can recognise an IF rod domain in the interval 188–501 (EREQIKSLND…KLLEGEEIRM (314 aa)). The segment at 224 to 243 (QQVDTTTRTQNLDPFFENYI) is linker 1. Residues 244–334 (SILRRKVDSL…ALYQMEMSQM (91 aa)) form a coil 1B region. K284 is modified (N6,N6-dimethyllysine). Residues 335–358 (QTQISETNVVLSMDNNRSLDLDGI) are linker 12. At S352 the chain carries Phosphoserine. Residues 359–497 (ISEVKAQYDS…ATYKKLLEGE (139 aa)) form a coil 2 region. Positions 397 to 483 (DSVRNTKMEI…QELMNTKLAL (87 aa)) form a coiled coil. Positions 498-637 (EIRMSGECTP…VSTSYSRGTK (140 aa)) are tail. Disordered stretches follow at residues 505-533 (CTPNVSVSVSTSHTSMSGSSSRGGGSGGG) and 563-637 (YGGG…RGTK). A compositionally biased stretch (low complexity) spans 509-524 (VSVSVSTSHTSMSGSS). Residues R526, R585, and R607 each carry the omega-N-methylarginine modification. The span at 563–618 (YGGGSGGGSYGGGSGGGSSGSHRGGSGGGGGSSGGSYGGSSGGGRGGSSSGGGGVK) shows a compositional bias: gly residues. Residues 624–637 (TVKFVSTSYSRGTK) are compositionally biased toward polar residues.

The protein belongs to the intermediate filament family. As to quaternary structure, heterotetramer of two type I and two type II keratins. Heterodimer with KRT10. Two heterodimers of KRT1 and KRT10 form a heterotetramer. Forms a heterodimer with KRT14; the interaction is more abundant in the absence of KRT5. Interacts with PLEC isoform 1C, when in a heterodimer with KRT10. Interacts with ITGB1 in the presence of RACK1 and SRC, and with RACK1. Interacts with C1QBP; the association represents a cell surface kininogen receptor. Interacts with EPPK1; interaction is dependent of higher-order structure of intermediate filament. Undergoes deimination of some arginine residues (citrullination). As to expression, expressed in the infundibular regions of the ear, the interfollicular epidermis of the back, in the interscale regions containing hair follicles in the tail, and in the soles of the footpads (at protein level).

Its subcellular location is the cell membrane. It is found in the cytoplasm. Its function is as follows. May regulate the activity of kinases such as PKC and SRC via binding to integrin beta-1 (ITB1) and the receptor of activated protein C kinase 1 (RACK1). In complex with C1QBP is a high affinity receptor for kininogen-1/HMWK. The sequence is that of Keratin, type II cytoskeletal 1 (Krt1) from Mus musculus (Mouse).